A 321-amino-acid chain; its full sequence is Putative ribose-phosphate pyrophosphokinase 2 (321 aa).

Residues 43–45 and 102–103 each bind ATP; these read DGE and RQ. Residues His136 and Asp176 each contribute to the Mg(2+) site. A D-ribose 5-phosphate-binding site is contributed by Asp225.

Belongs to the ribose-phosphate pyrophosphokinase family. Class I subfamily. Homohexamer. Mg(2+) serves as cofactor.

It localises to the cytoplasm. It catalyses the reaction D-ribose 5-phosphate + ATP = 5-phospho-alpha-D-ribose 1-diphosphate + AMP + H(+). It functions in the pathway metabolic intermediate biosynthesis; 5-phospho-alpha-D-ribose 1-diphosphate biosynthesis; 5-phospho-alpha-D-ribose 1-diphosphate from D-ribose 5-phosphate (route I): step 1/1. Involved in the biosynthesis of the central metabolite phospho-alpha-D-ribosyl-1-pyrophosphate (PRPP) via the transfer of pyrophosphoryl group from ATP to 1-hydroxyl of ribose-5-phosphate (Rib-5-P). This is Putative ribose-phosphate pyrophosphokinase 2 from Lactiplantibacillus plantarum (strain ATCC BAA-793 / NCIMB 8826 / WCFS1) (Lactobacillus plantarum).